The chain runs to 264 residues: uncharacterized protein (264 aa).

The interval 235–264 (ESSDEEDNDDDIINNDTNNDINNDDIEIKT) is disordered. The segment covering 237–247 (SDEEDNDDDII) has biased composition (acidic residues).

This is an uncharacterized protein from Acanthamoeba polyphaga mimivirus (APMV).